Here is a 408-residue protein sequence, read N- to C-terminus: Arginine biosynthesis bifunctional protein ArgJ (408 aa).

Substrate contacts are provided by T156, K182, T193, E279, N403, and T408. T193 functions as the Nucleophile in the catalytic mechanism.

It belongs to the ArgJ family. In terms of assembly, heterotetramer of two alpha and two beta chains.

The protein resides in the cytoplasm. The enzyme catalyses N(2)-acetyl-L-ornithine + L-glutamate = N-acetyl-L-glutamate + L-ornithine. The catalysed reaction is L-glutamate + acetyl-CoA = N-acetyl-L-glutamate + CoA + H(+). It participates in amino-acid biosynthesis; L-arginine biosynthesis; L-ornithine and N-acetyl-L-glutamate from L-glutamate and N(2)-acetyl-L-ornithine (cyclic): step 1/1. Its pathway is amino-acid biosynthesis; L-arginine biosynthesis; N(2)-acetyl-L-ornithine from L-glutamate: step 1/4. Its function is as follows. Catalyzes two activities which are involved in the cyclic version of arginine biosynthesis: the synthesis of N-acetylglutamate from glutamate and acetyl-CoA as the acetyl donor, and of ornithine by transacetylation between N(2)-acetylornithine and glutamate. The chain is Arginine biosynthesis bifunctional protein ArgJ from Methylococcus capsulatus (strain ATCC 33009 / NCIMB 11132 / Bath).